Here is a 206-residue protein sequence, read N- to C-terminus: Large ribosomal subunit protein uL4 (206 aa).

The disordered stretch occupies residues 48-97; sequence THAVKNRSLVSGGGKKPWKQKHTGRARQGSTRASQWVGGGKAMGPKPRDY. The segment covering 63 to 72 has biased composition (basic residues); the sequence is KPWKQKHTGR.

The protein belongs to the universal ribosomal protein uL4 family. In terms of assembly, part of the 50S ribosomal subunit.

Its function is as follows. One of the primary rRNA binding proteins, this protein initially binds near the 5'-end of the 23S rRNA. It is important during the early stages of 50S assembly. It makes multiple contacts with different domains of the 23S rRNA in the assembled 50S subunit and ribosome. Forms part of the polypeptide exit tunnel. The protein is Large ribosomal subunit protein uL4 of Anaeromyxobacter sp. (strain K).